A 483-amino-acid chain; its full sequence is Glutamate--tRNA ligase (483 aa).

The short motif at 9–19 (PSPTGFLHIGN) is the 'HIGH' region element. The 'KMSKS' region motif lies at 253–257 (KLSKR). Lysine 256 is a binding site for ATP.

Belongs to the class-I aminoacyl-tRNA synthetase family. Glutamate--tRNA ligase type 1 subfamily. In terms of assembly, monomer.

Its subcellular location is the cytoplasm. It catalyses the reaction tRNA(Glu) + L-glutamate + ATP = L-glutamyl-tRNA(Glu) + AMP + diphosphate. Catalyzes the attachment of glutamate to tRNA(Glu) in a two-step reaction: glutamate is first activated by ATP to form Glu-AMP and then transferred to the acceptor end of tRNA(Glu). This chain is Glutamate--tRNA ligase, found in Mycoplasma capricolum subsp. capricolum (strain California kid / ATCC 27343 / NCTC 10154).